The primary structure comprises 114 residues: Progonadoliberin-2 (114 aa).

The signal sequence occupies residues M1–A25. The tract at residues P22 to G80 is disordered. G35 carries the glycine amide modification.

It belongs to the GnRH family. Midbrain.

It is found in the secreted. Stimulates the secretion of gonadotropins; it stimulates the secretion of both luteinizing and follicle-stimulating hormones. The chain is Progonadoliberin-2 (GNRH2) from Tupaia belangeri (Common tree shrew).